Here is a 665-residue protein sequence, read N- to C-terminus: Fructose-1,6-bisphosphatase class 3 (665 aa).

The protein belongs to the FBPase class 3 family. Mn(2+) is required as a cofactor.

The catalysed reaction is beta-D-fructose 1,6-bisphosphate + H2O = beta-D-fructose 6-phosphate + phosphate. It functions in the pathway carbohydrate biosynthesis; gluconeogenesis. The polypeptide is Fructose-1,6-bisphosphatase class 3 (Clostridium acetobutylicum (strain ATCC 824 / DSM 792 / JCM 1419 / IAM 19013 / LMG 5710 / NBRC 13948 / NRRL B-527 / VKM B-1787 / 2291 / W)).